Here is a 430-residue protein sequence, read N- to C-terminus: uncharacterized protein (430 aa).

A run of 12 helical transmembrane segments spans residues 18-38 (LFLL…NTFV), 49-69 (FIDL…TFYL), 80-100 (VFIL…VLLA), 109-129 (VLIG…FNVL), 145-165 (FMGI…GFVI), 175-195 (TVIF…SFFL), 235-255 (IFVF…LALG), 256-276 (TFGL…SRLI), 285-305 (ILLG…HMSF), 307-327 (TLLT…VPYV), 353-373 (MFLN…VALL), and 377-397 (VGIP…YYFV). The interval 407–430 (GENETMEEDGQKRVTEPTLLKGER) is disordered. The segment covering 415-430 (DGQKRVTEPTLLKGER) has biased composition (basic and acidic residues).

Its subcellular location is the cell membrane. This is an uncharacterized protein from Bacillus subtilis (strain 168).